The following is a 420-amino-acid chain: ATP phosphoribosyltransferase regulatory subunit (420 aa).

The protein belongs to the class-II aminoacyl-tRNA synthetase family. HisZ subfamily. Heteromultimer composed of HisG and HisZ subunits.

The protein localises to the cytoplasm. The protein operates within amino-acid biosynthesis; L-histidine biosynthesis; L-histidine from 5-phospho-alpha-D-ribose 1-diphosphate: step 1/9. Its function is as follows. Required for the first step of histidine biosynthesis. May allow the feedback regulation of ATP phosphoribosyltransferase activity by histidine. This Bacillus mycoides (strain KBAB4) (Bacillus weihenstephanensis) protein is ATP phosphoribosyltransferase regulatory subunit.